Consider the following 191-residue polypeptide: Peptidyl-tRNA hydrolase (191 aa).

Residue tyrosine 14 coordinates tRNA. The active-site Proton acceptor is histidine 19. Residues tyrosine 64, asparagine 66, and asparagine 112 each contribute to the tRNA site.

The protein belongs to the PTH family. Monomer.

It is found in the cytoplasm. It carries out the reaction an N-acyl-L-alpha-aminoacyl-tRNA + H2O = an N-acyl-L-amino acid + a tRNA + H(+). Hydrolyzes ribosome-free peptidyl-tRNAs (with 1 or more amino acids incorporated), which drop off the ribosome during protein synthesis, or as a result of ribosome stalling. In terms of biological role, catalyzes the release of premature peptidyl moieties from peptidyl-tRNA molecules trapped in stalled 50S ribosomal subunits, and thus maintains levels of free tRNAs and 50S ribosomes. The chain is Peptidyl-tRNA hydrolase from Clostridium beijerinckii (strain ATCC 51743 / NCIMB 8052) (Clostridium acetobutylicum).